We begin with the raw amino-acid sequence, 879 residues long: Alanine--tRNA ligase (879 aa).

The Zn(2+) site is built by His-566, His-570, Cys-668, and His-672.

It belongs to the class-II aminoacyl-tRNA synthetase family. Requires Zn(2+) as cofactor.

It localises to the cytoplasm. It catalyses the reaction tRNA(Ala) + L-alanine + ATP = L-alanyl-tRNA(Ala) + AMP + diphosphate. Its function is as follows. Catalyzes the attachment of alanine to tRNA(Ala) in a two-step reaction: alanine is first activated by ATP to form Ala-AMP and then transferred to the acceptor end of tRNA(Ala). Also edits incorrectly charged Ser-tRNA(Ala) and Gly-tRNA(Ala) via its editing domain. The polypeptide is Alanine--tRNA ligase (Listeria monocytogenes serovar 1/2a (strain ATCC BAA-679 / EGD-e)).